A 428-amino-acid polypeptide reads, in one-letter code: GTPase Obg (428 aa).

The region spanning 1–158 is the Obg domain; that stretch reads MFVDQVQVEV…RFIKLELKVL (158 aa). The OBG-type G domain occupies 159–333; the sequence is ADVGLVGFPS…LMHKTAEVLK (175 aa). GTP-binding positions include 165 to 172, 190 to 194, 212 to 215, 282 to 285, and 314 to 316; these read GFPSVGKS, FTTLV, DLPG, TKMD, and SSL. Residues serine 172 and threonine 192 each coordinate Mg(2+). The region spanning 350 to 428 is the OCT domain; it reads YKYQPEPALK…IDDFTFEFVE (79 aa).

This sequence belongs to the TRAFAC class OBG-HflX-like GTPase superfamily. OBG GTPase family. Monomer. It depends on Mg(2+) as a cofactor.

Its subcellular location is the cytoplasm. Functionally, an essential GTPase which binds GTP, GDP and possibly (p)ppGpp with moderate affinity, with high nucleotide exchange rates and a fairly low GTP hydrolysis rate. Plays a role in control of the cell cycle, stress response, ribosome biogenesis and in those bacteria that undergo differentiation, in morphogenesis control. In Lacticaseibacillus paracasei (strain ATCC 334 / BCRC 17002 / CCUG 31169 / CIP 107868 / KCTC 3260 / NRRL B-441) (Lactobacillus paracasei), this protein is GTPase Obg.